We begin with the raw amino-acid sequence, 141 residues long: 3-hydroxyacyl-[acyl-carrier-protein] dehydratase FabZ (141 aa).

Residue His-49 is part of the active site.

This sequence belongs to the thioester dehydratase family. FabZ subfamily.

The protein resides in the cytoplasm. The enzyme catalyses a (3R)-hydroxyacyl-[ACP] = a (2E)-enoyl-[ACP] + H2O. Functionally, involved in unsaturated fatty acids biosynthesis. Catalyzes the dehydration of short chain beta-hydroxyacyl-ACPs and long chain saturated and unsaturated beta-hydroxyacyl-ACPs. In Enterococcus faecalis (strain ATCC 700802 / V583), this protein is 3-hydroxyacyl-[acyl-carrier-protein] dehydratase FabZ (fabZ2).